The chain runs to 508 residues: Photosystem II CP47 reaction center protein (508 aa).

6 helical membrane passes run 21–36, 101–115, 140–156, 203–218, 237–252, and 457–472; these read AVHLMHTALVAGWAGS, IVLSGLLFLAAVWHW, GIHLFLSGLLCFGFGAF, IAAGVVGIVAGLFHLT, VLSSSLAAVFFAAFVV, and SFALLFFFGHIWHGSR.

This sequence belongs to the PsbB/PsbC family. PsbB subfamily. As to quaternary structure, PSII is composed of 1 copy each of membrane proteins PsbA, PsbB, PsbC, PsbD, PsbE, PsbF, PsbH, PsbI, PsbJ, PsbK, PsbL, PsbM, PsbT, PsbX, PsbY, PsbZ, Psb30/Ycf12, peripheral proteins PsbO, CyanoQ (PsbQ), PsbU, PsbV and a large number of cofactors. It forms dimeric complexes. Requires Binds multiple chlorophylls. PSII binds additional chlorophylls, carotenoids and specific lipids. as cofactor.

Its subcellular location is the cellular thylakoid membrane. Functionally, one of the components of the core complex of photosystem II (PSII). It binds chlorophyll and helps catalyze the primary light-induced photochemical processes of PSII. PSII is a light-driven water:plastoquinone oxidoreductase, using light energy to abstract electrons from H(2)O, generating O(2) and a proton gradient subsequently used for ATP formation. The chain is Photosystem II CP47 reaction center protein from Synechococcus elongatus (strain ATCC 33912 / PCC 7942 / FACHB-805) (Anacystis nidulans R2).